Reading from the N-terminus, the 148-residue chain is 3-hydroxyacyl-[acyl-carrier-protein] dehydratase FabZ (148 aa).

His-55 is a catalytic residue.

The protein belongs to the thioester dehydratase family. FabZ subfamily.

The protein resides in the cytoplasm. It carries out the reaction a (3R)-hydroxyacyl-[ACP] = a (2E)-enoyl-[ACP] + H2O. Involved in unsaturated fatty acids biosynthesis. Catalyzes the dehydration of short chain beta-hydroxyacyl-ACPs and long chain saturated and unsaturated beta-hydroxyacyl-ACPs. The chain is 3-hydroxyacyl-[acyl-carrier-protein] dehydratase FabZ from Haemophilus influenzae (strain 86-028NP).